The primary structure comprises 509 residues: Maturase K (509 aa).

It belongs to the intron maturase 2 family. MatK subfamily.

Its subcellular location is the plastid. The protein localises to the chloroplast. Usually encoded in the trnK tRNA gene intron. Probably assists in splicing its own and other chloroplast group II introns. This Clematis lasiantha (Pipestem clematis) protein is Maturase K.